The following is a 75-amino-acid chain: DNA-directed RNA polymerase subunit omega (75 aa).

It belongs to the RNA polymerase subunit omega family. In cyanobacteria the RNAP catalytic core is composed of 2 alpha, 1 beta, 1 beta', 1 gamma and 1 omega subunit. When a sigma factor is associated with the core the holoenzyme is formed, which can initiate transcription.

It catalyses the reaction RNA(n) + a ribonucleoside 5'-triphosphate = RNA(n+1) + diphosphate. In terms of biological role, promotes RNA polymerase assembly. Latches the N- and C-terminal regions of the beta' subunit thereby facilitating its interaction with the beta and alpha subunits. This chain is DNA-directed RNA polymerase subunit omega, found in Prochlorococcus marinus (strain MIT 9313).